Here is a 420-residue protein sequence, read N- to C-terminus: D-tagatose-1,6-bisphosphate aldolase subunit GatZ (420 aa).

This sequence belongs to the GatZ/KbaZ family. GatZ subfamily. Forms a complex with GatY.

Its pathway is carbohydrate metabolism; D-tagatose 6-phosphate degradation; D-glyceraldehyde 3-phosphate and glycerone phosphate from D-tagatose 6-phosphate: step 2/2. In terms of biological role, component of the tagatose-1,6-bisphosphate aldolase GatYZ that is required for full activity and stability of the Y subunit. Could have a chaperone-like function for the proper and stable folding of GatY. When expressed alone, GatZ does not show any aldolase activity. Is involved in the catabolism of galactitol. This chain is D-tagatose-1,6-bisphosphate aldolase subunit GatZ, found in Escherichia coli (strain SE11).